We begin with the raw amino-acid sequence, 261 residues long: Cytochrome c oxidase subunit 3 (261 aa).

The Mitochondrial matrix portion of the chain corresponds to 1-15 (MTHQTHAYHMVNPSP). Residues 16 to 34 (WPLTGALSALLMTSGLTMW) form a helical membrane-spanning segment. Residues 35 to 40 (FHFNSM) lie on the Mitochondrial intermembrane side of the membrane. The helical transmembrane segment at 41–66 (TLLTLGLTTNMLTMYQWWRDIIREST) threads the bilayer. Residues 67 to 72 (FQGHHT) lie on the Mitochondrial matrix side of the membrane. A helical transmembrane segment spans residues 73 to 105 (PNVQKGLRYGMILFIISEVLFFTGFFWAFYHSS). At 106-128 (LAPTPELGGCWPPTGIHPLNPLE) the chain is on the mitochondrial intermembrane side. Residues 129 to 152 (VPLLNTSVLLASGVSITWAHHSLM) form a helical membrane-spanning segment. Residues 153-155 (EGN) are Mitochondrial matrix-facing. Residues 156-183 (RNHMLQALFITISLGVYFTLLQASEYYE) traverse the membrane as a helical segment. Residues 184–190 (APFTISD) lie on the Mitochondrial intermembrane side of the membrane. A helical membrane pass occupies residues 191 to 223 (GVYGSTFFVATGFHGLHVIIGSTFLIVCFFRQL). Topologically, residues 224 to 232 (KFHFTSNHH) are mitochondrial matrix. Residues 233 to 256 (FGFEAAAWYWHFVDVVWLFLYVSI) traverse the membrane as a helical segment. Topologically, residues 257–261 (YWWGS) are mitochondrial intermembrane.

The protein belongs to the cytochrome c oxidase subunit 3 family. Component of the cytochrome c oxidase (complex IV, CIV), a multisubunit enzyme composed of 14 subunits. The complex is composed of a catalytic core of 3 subunits MT-CO1, MT-CO2 and MT-CO3, encoded in the mitochondrial DNA, and 11 supernumerary subunits COX4I, COX5A, COX5B, COX6A, COX6B, COX6C, COX7A, COX7B, COX7C, COX8 and NDUFA4, which are encoded in the nuclear genome. The complex exists as a monomer or a dimer and forms supercomplexes (SCs) in the inner mitochondrial membrane with NADH-ubiquinone oxidoreductase (complex I, CI) and ubiquinol-cytochrome c oxidoreductase (cytochrome b-c1 complex, complex III, CIII), resulting in different assemblies (supercomplex SCI(1)III(2)IV(1) and megacomplex MCI(2)III(2)IV(2)).

It localises to the mitochondrion inner membrane. It catalyses the reaction 4 Fe(II)-[cytochrome c] + O2 + 8 H(+)(in) = 4 Fe(III)-[cytochrome c] + 2 H2O + 4 H(+)(out). Component of the cytochrome c oxidase, the last enzyme in the mitochondrial electron transport chain which drives oxidative phosphorylation. The respiratory chain contains 3 multisubunit complexes succinate dehydrogenase (complex II, CII), ubiquinol-cytochrome c oxidoreductase (cytochrome b-c1 complex, complex III, CIII) and cytochrome c oxidase (complex IV, CIV), that cooperate to transfer electrons derived from NADH and succinate to molecular oxygen, creating an electrochemical gradient over the inner membrane that drives transmembrane transport and the ATP synthase. Cytochrome c oxidase is the component of the respiratory chain that catalyzes the reduction of oxygen to water. Electrons originating from reduced cytochrome c in the intermembrane space (IMS) are transferred via the dinuclear copper A center (CU(A)) of subunit 2 and heme A of subunit 1 to the active site in subunit 1, a binuclear center (BNC) formed by heme A3 and copper B (CU(B)). The BNC reduces molecular oxygen to 2 water molecules using 4 electrons from cytochrome c in the IMS and 4 protons from the mitochondrial matrix. The chain is Cytochrome c oxidase subunit 3 (MT-CO3) from Antidorcas marsupialis (Springbok).